Consider the following 187-residue polypeptide: UPF0301 protein plu1183 (187 aa).

Belongs to the UPF0301 (AlgH) family.

The sequence is that of UPF0301 protein plu1183 from Photorhabdus laumondii subsp. laumondii (strain DSM 15139 / CIP 105565 / TT01) (Photorhabdus luminescens subsp. laumondii).